A 276-amino-acid chain; its full sequence is Large ribosomal subunit protein uL2 (276 aa).

Disordered stretches follow at residues 1–20 and 219–276; these read MGIKKYNPTTNGRRNMTTND and TVRG…RRKK. The segment covering 7 to 20 has biased composition (polar residues); it reads NPTTNGRRNMTTND.

This sequence belongs to the universal ribosomal protein uL2 family. As to quaternary structure, part of the 50S ribosomal subunit. Forms a bridge to the 30S subunit in the 70S ribosome.

Its function is as follows. One of the primary rRNA binding proteins. Required for association of the 30S and 50S subunits to form the 70S ribosome, for tRNA binding and peptide bond formation. It has been suggested to have peptidyltransferase activity; this is somewhat controversial. Makes several contacts with the 16S rRNA in the 70S ribosome. The polypeptide is Large ribosomal subunit protein uL2 (Bacillus cereus (strain Q1)).